We begin with the raw amino-acid sequence, 347 residues long: Anthranilate phosphoribosyltransferase (347 aa).

5-phospho-alpha-D-ribose 1-diphosphate-binding positions include Gly88, 91–92, Thr96, 98–101, 116–124, and Ser128; these read GD, NIST, and KHGNRSVSS. Residue Gly88 participates in anthranilate binding. Ser100 provides a ligand contact to Mg(2+). Residue Asn119 coordinates anthranilate. Residue Arg174 coordinates anthranilate. Residues Asp232 and Glu233 each coordinate Mg(2+).

The protein belongs to the anthranilate phosphoribosyltransferase family. In terms of assembly, homodimer. It depends on Mg(2+) as a cofactor.

The catalysed reaction is N-(5-phospho-beta-D-ribosyl)anthranilate + diphosphate = 5-phospho-alpha-D-ribose 1-diphosphate + anthranilate. Its pathway is amino-acid biosynthesis; L-tryptophan biosynthesis; L-tryptophan from chorismate: step 2/5. Functionally, catalyzes the transfer of the phosphoribosyl group of 5-phosphorylribose-1-pyrophosphate (PRPP) to anthranilate to yield N-(5'-phosphoribosyl)-anthranilate (PRA). The polypeptide is Anthranilate phosphoribosyltransferase (Shewanella sp. (strain MR-4)).